Consider the following 488-residue polypeptide: Putative BTB/POZ domain-containing protein L674 (488 aa).

A BTB domain is found at Asn-83–Asn-150.

Belongs to the mimivirus BTB/WD family.

This is Putative BTB/POZ domain-containing protein L674 from Acanthamoeba polyphaga (Amoeba).